The following is a 642-amino-acid chain: Phosphomethylpyrimidine synthase (642 aa).

Substrate-binding positions include N235, M264, Y293, H329, 349-351 (SRG), 390-393 (DGLR), and E429. H433 contacts Zn(2+). Substrate is bound at residue Y456. Zn(2+) is bound at residue H497. 3 residues coordinate [4Fe-4S] cluster: C577, C580, and C585.

It belongs to the ThiC family. In terms of assembly, homodimer. Requires [4Fe-4S] cluster as cofactor.

The catalysed reaction is 5-amino-1-(5-phospho-beta-D-ribosyl)imidazole + S-adenosyl-L-methionine = 4-amino-2-methyl-5-(phosphooxymethyl)pyrimidine + CO + 5'-deoxyadenosine + formate + L-methionine + 3 H(+). It participates in cofactor biosynthesis; thiamine diphosphate biosynthesis. Functionally, catalyzes the synthesis of the hydroxymethylpyrimidine phosphate (HMP-P) moiety of thiamine from aminoimidazole ribotide (AIR) in a radical S-adenosyl-L-methionine (SAM)-dependent reaction. The protein is Phosphomethylpyrimidine synthase of Alteromonas mediterranea (strain DSM 17117 / CIP 110805 / LMG 28347 / Deep ecotype).